The chain runs to 63 residues: Adipokinetic prohormone type 1 (63 aa).

A signal peptide spans Met1–Ala22. Position 23 is a pyrrolidone carboxylic acid (Gln23). Position 32 is a threonine amide (Thr32).

This sequence belongs to the AKH/HRTH/RPCH family.

It is found in the secreted. In terms of biological role, this hormone, released from cells in the corpora cardiaca, causes release of diglycerides from the fat body and stimulation of muscles to use these diglycerides as an energy source during energy-demanding processes. This is Adipokinetic prohormone type 1 from Locusta migratoria (Migratory locust).